Here is a 428-residue protein sequence, read N- to C-terminus: Patatin-like protein 3 (428 aa).

The PNPLA domain maps to 38-252 (LSIDGGGIRG…AANNPTLCAI (215 aa)). The short motif at 42-47 (GGGIRG) is the GXGXXG element. Residues 80–84 (GTSTG) carry the GXSXG motif. The active-site Nucleophile is the S82. D239 serves as the catalytic Proton acceptor. The short motif at 239–241 (DGG) is the DGA/G element. S423 is subject to Phosphoserine.

It belongs to the patatin family. As to expression, expressed specifically in the stigma, ovary and funiculus of the ovary.

It localises to the cytoplasm. Functionally, possesses non-specific lipolytic acyl hydrolase (LAH) activity. Catalyzes the hydrolysis of the neutral lipids monogalactosyldiacylglycerol (MGDG), digalactosyldiacylglycerol (DGDG) and phosphatidylglycerol (PG), and less efficiently the polar lipids phosphatidylcholine (PC) and phosphatidylinositol (PI), but not the storage lipid triacylglycerol (TAG). May play a role in root development. This Arabidopsis thaliana (Mouse-ear cress) protein is Patatin-like protein 3 (PLP3).